The following is a 292-amino-acid chain: Poly(U)-specific endoribonuclease-A (292 aa).

The EndoU domain maps to 8–285 (LNHELSKLFN…IGTAYPVLLS (278 aa)). Active-site residues include histidine 162, histidine 178, and lysine 224.

It belongs to the ENDOU family. In terms of assembly, monomer. It depends on Mn(2+) as a cofactor.

The protein resides in the nucleus. The enzyme catalyses uridylyl-uridylyl-ribonucleotide-RNA = a 3'-end uridylyl-2',3'-cyclophospho-uridine-RNA + a 5'-end dephospho-ribonucleoside-RNA. Poly(U)-specific endoribonuclease involved in the processing of intron-encoded box C/D snoRNAs, such as U16 and U86. Releases products that have 2',3'-cyclic phosphate termini at the 3'-end. In Xenopus laevis (African clawed frog), this protein is Poly(U)-specific endoribonuclease-A (endou-a).